Reading from the N-terminus, the 243-residue chain is UPF0173 metal-dependent hydrolase Xaut_3786 (243 aa).

The protein belongs to the UPF0173 family.

In Xanthobacter autotrophicus (strain ATCC BAA-1158 / Py2), this protein is UPF0173 metal-dependent hydrolase Xaut_3786.